A 193-amino-acid polypeptide reads, in one-letter code: dTTP/UTP pyrophosphatase (193 aa).

Asp73 acts as the Proton acceptor in catalysis.

Belongs to the Maf family. YhdE subfamily. A divalent metal cation serves as cofactor.

The protein localises to the cytoplasm. It carries out the reaction dTTP + H2O = dTMP + diphosphate + H(+). The catalysed reaction is UTP + H2O = UMP + diphosphate + H(+). In terms of biological role, nucleoside triphosphate pyrophosphatase that hydrolyzes dTTP and UTP. May have a dual role in cell division arrest and in preventing the incorporation of modified nucleotides into cellular nucleic acids. This chain is dTTP/UTP pyrophosphatase, found in Caulobacter vibrioides (strain ATCC 19089 / CIP 103742 / CB 15) (Caulobacter crescentus).